The following is a 154-amino-acid chain: Xanthine-guanine phosphoribosyltransferase (154 aa).

Residues 37 to 38 (RG), R69, and 88 to 96 (EDLVDSGDT) each bind 5-phospho-alpha-D-ribose 1-diphosphate. R69 is a GMP binding site. Residue D89 coordinates Mg(2+). Guanine-binding residues include D92 and I135. Residues D92 and I135 each coordinate xanthine. Residues 92–96 (DSGDT) and 134–135 (WI) each bind GMP.

The protein belongs to the purine/pyrimidine phosphoribosyltransferase family. XGPT subfamily. Homotetramer. Mg(2+) serves as cofactor.

The protein resides in the cell inner membrane. It carries out the reaction GMP + diphosphate = guanine + 5-phospho-alpha-D-ribose 1-diphosphate. It catalyses the reaction XMP + diphosphate = xanthine + 5-phospho-alpha-D-ribose 1-diphosphate. The catalysed reaction is IMP + diphosphate = hypoxanthine + 5-phospho-alpha-D-ribose 1-diphosphate. The protein operates within purine metabolism; GMP biosynthesis via salvage pathway; GMP from guanine: step 1/1. Its pathway is purine metabolism; XMP biosynthesis via salvage pathway; XMP from xanthine: step 1/1. Functionally, purine salvage pathway enzyme that catalyzes the transfer of the ribosyl-5-phosphate group from 5-phospho-alpha-D-ribose 1-diphosphate (PRPP) to the N9 position of the 6-oxopurines guanine and xanthine to form the corresponding ribonucleotides GMP (guanosine 5'-monophosphate) and XMP (xanthosine 5'-monophosphate), with the release of PPi. To a lesser extent, also acts on hypoxanthine. This Vibrio atlanticus (strain LGP32) (Vibrio splendidus (strain Mel32)) protein is Xanthine-guanine phosphoribosyltransferase.